The sequence spans 1755 residues: Transposon Ty1-JR1 Gag-Pol polyprotein (1755 aa).

Residues 1 to 16 are compositionally biased toward low complexity; it reads MESQQLSQHSHISHGS. Disordered stretches follow at residues 1–93, 126–173, and 352–421; these read MESQ…MMTQ, PQSQ…RPPP, and GSRN…SKST. Composition is skewed to polar residues over residues 48–60 and 127–152; these read TKANSQQTTTPAS and QSQFPQYPSSVGTPLSTPSPESGNTF. Residues 153 to 165 are compositionally biased toward low complexity; sequence TDSSSADSDMTST. Positions 299-401 are RNA-binding; the sequence is NNGIHINNKV…NSKSKTARAH (103 aa). The span at 402–418 shows a compositional bias: low complexity; it reads NVSTSNNSPSTDNDSIS. A Phosphoserine modification is found at serine 416. Aspartate 461 functions as the For protease activity; shared with dimeric partner in the catalytic mechanism. An integrase-type zinc finger-like region spans residues 583–640; the sequence is NVHTSESTRKYPYPFIHRMLAHANAQTIRYSLKNNTITYFNESDVDWSSAIDYQCPDC. In terms of domain architecture, Integrase catalytic spans 660 to 835; that stretch reads NSYEPFQYLH…AGLDISTLLP (176 aa). Residues aspartate 671 and aspartate 736 each coordinate Mg(2+). Disordered stretches follow at residues 956–1087, 1092–1111, and 1130–1186; these read SKAV…ETEK, RSPSIDASPPENNSSHNIVP, and DLPL…EDNE. Positions 960 to 969 are enriched in low complexity; the sequence is SPTDSTPPST. The segment covering 1005–1015 has biased composition (polar residues); the sequence is STPQISNIEST. The segment covering 1038–1053 has biased composition (basic and acidic residues); it reads ESSHASKSKDFRHSDS. 2 stretches are compositionally biased toward polar residues: residues 1054–1082 and 1101–1111; these read YSENETNHTNVPISSTGGTNNKTVPQISD and PENNSSHNIVP. The Bipartite nuclear localization signal motif lies at 1178-1212; it reads KKRSLEDNETEIKVSRDTWNTKNMRSLEPPRSKKR. The Reverse transcriptase Ty1/copia-type domain maps to 1338 to 1476; that stretch reads NNYYITQLDI…DILGLEIKYQ (139 aa). Residues aspartate 1346, aspartate 1427, aspartate 1428, aspartate 1610, glutamate 1652, and aspartate 1685 each contribute to the Mg(2+) site. Residues 1610–1752 form the RNase H Ty1/copia-type domain; sequence DASYGNQPYY…IKTFKLLTNK (143 aa).

In terms of assembly, the capsid protein forms a homotrimer, from which the VLPs are assembled. The protease is a homodimer, whose active site consists of two apposed aspartic acid residues. In terms of processing, initially, virus-like particles (VLPs) are composed of the structural unprocessed proteins Gag and Gag-Pol, and also contain the host initiator methionine tRNA (tRNA(i)-Met) which serves as a primer for minus-strand DNA synthesis, and a dimer of genomic Ty RNA. Processing of the polyproteins occurs within the particle and proceeds by an ordered pathway, called maturation. First, the protease (PR) is released by autocatalytic cleavage of the Gag-Pol polyprotein yielding capsid protein p45 and a Pol-p154 precursor protein. This cleavage is a prerequisite for subsequent processing of Pol-p154 at the remaining sites to release the mature structural and catalytic proteins. Maturation takes place prior to the RT reaction and is required to produce transposition-competent VLPs.

Its subcellular location is the cytoplasm. It is found in the nucleus. The catalysed reaction is DNA(n) + a 2'-deoxyribonucleoside 5'-triphosphate = DNA(n+1) + diphosphate. The enzyme catalyses Endonucleolytic cleavage to 5'-phosphomonoester.. Its function is as follows. Capsid protein (CA) is the structural component of the virus-like particle (VLP), forming the shell that encapsulates the retrotransposons dimeric RNA genome. The particles are assembled from trimer-clustered units and there are holes in the capsid shells that allow for the diffusion of macromolecules. CA also has nucleocapsid-like chaperone activity, promoting primer tRNA(i)-Met annealing to the multipartite primer-binding site (PBS), dimerization of Ty1 RNA and initiation of reverse transcription. The aspartyl protease (PR) mediates the proteolytic cleavages of the Gag and Gag-Pol polyproteins after assembly of the VLP. Functionally, reverse transcriptase/ribonuclease H (RT) is a multifunctional enzyme that catalyzes the conversion of the retro-elements RNA genome into dsDNA within the VLP. The enzyme displays a DNA polymerase activity that can copy either DNA or RNA templates, and a ribonuclease H (RNase H) activity that cleaves the RNA strand of RNA-DNA heteroduplexes during plus-strand synthesis and hydrolyzes RNA primers. The conversion leads to a linear dsDNA copy of the retrotransposon that includes long terminal repeats (LTRs) at both ends. In terms of biological role, integrase (IN) targets the VLP to the nucleus, where a subparticle preintegration complex (PIC) containing at least integrase and the newly synthesized dsDNA copy of the retrotransposon must transit the nuclear membrane. Once in the nucleus, integrase performs the integration of the dsDNA into the host genome. The sequence is that of Transposon Ty1-JR1 Gag-Pol polyprotein (TY1B-JR1) from Saccharomyces cerevisiae (strain ATCC 204508 / S288c) (Baker's yeast).